We begin with the raw amino-acid sequence, 86 residues long: Putative membrane protein insertion efficiency factor (86 aa).

The segment at 66-86 (AGGHDPVPPVPPQRYPSAQEH) is disordered.

The protein belongs to the UPF0161 family.

It localises to the cell inner membrane. Could be involved in insertion of integral membrane proteins into the membrane. This is Putative membrane protein insertion efficiency factor from Nitratidesulfovibrio vulgaris (strain ATCC 29579 / DSM 644 / CCUG 34227 / NCIMB 8303 / VKM B-1760 / Hildenborough) (Desulfovibrio vulgaris).